The following is a 290-amino-acid chain: 7-methylguanosine phosphate-specific 5'-nucleotidase A (290 aa).

Asp-39 (nucleophile) is an active-site residue. 2 residues coordinate Mg(2+): Asp-39 and Asp-41. Asp-41 functions as the Proton donor in the catalytic mechanism. Glu-86 is a CMP binding site. Glu-86 contributes to the N(7)-methyl-GMP binding site. Residues 154–155 (SA) and Lys-203 contribute to the substrate site. Asp-228 serves as a coordination point for Mg(2+).

Belongs to the pyrimidine 5'-nucleotidase family. Monomer.

The protein resides in the cytoplasm. It catalyses the reaction N(7)-methyl-GMP + H2O = N(7)-methylguanosine + phosphate. The catalysed reaction is CMP + H2O = cytidine + phosphate. The enzyme catalyses a ribonucleoside 5'-phosphate + H2O = a ribonucleoside + phosphate. Functionally, specifically hydrolyzes 7-methylguanosine monophosphate (m(7)GMP) to 7-methylguanosine and inorganic phosphate. The specific activity for m(7)GMP may protect cells against undesired salvage of m(7)GMP and its incorporation into nucleic acids. Also has weak activity for CMP. UMP and purine nucleotides are poor substrates. This chain is 7-methylguanosine phosphate-specific 5'-nucleotidase A (Nt5c3b-a), found in Xenopus laevis (African clawed frog).